The following is an 88-amino-acid chain: Small ribosomal subunit protein uS15c (88 aa).

The protein belongs to the universal ribosomal protein uS15 family. Part of the 30S ribosomal subunit.

The protein resides in the plastid. Its subcellular location is the chloroplast. The chain is Small ribosomal subunit protein uS15c (rps15) from Angiopteris evecta (Mule's foot fern).